The following is a 431-amino-acid chain: Serine--tRNA ligase (431 aa).

237–239 serves as a coordination point for L-serine; the sequence is TAE. ATP is bound at residue 268-270; it reads RSE. Glu-291 provides a ligand contact to L-serine. 355–358 provides a ligand contact to ATP; sequence EISS. Ser-390 contributes to the L-serine binding site.

It belongs to the class-II aminoacyl-tRNA synthetase family. Type-1 seryl-tRNA synthetase subfamily. Homodimer. The tRNA molecule binds across the dimer.

The protein localises to the cytoplasm. It catalyses the reaction tRNA(Ser) + L-serine + ATP = L-seryl-tRNA(Ser) + AMP + diphosphate + H(+). It carries out the reaction tRNA(Sec) + L-serine + ATP = L-seryl-tRNA(Sec) + AMP + diphosphate + H(+). It participates in aminoacyl-tRNA biosynthesis; selenocysteinyl-tRNA(Sec) biosynthesis; L-seryl-tRNA(Sec) from L-serine and tRNA(Sec): step 1/1. Functionally, catalyzes the attachment of serine to tRNA(Ser). Is also able to aminoacylate tRNA(Sec) with serine, to form the misacylated tRNA L-seryl-tRNA(Sec), which will be further converted into selenocysteinyl-tRNA(Sec). This is Serine--tRNA ligase from Neisseria gonorrhoeae (strain NCCP11945).